The sequence spans 211 residues: Thymidylate kinase (211 aa).

11 to 18 (GPDGAGKT) serves as a coordination point for ATP.

This sequence belongs to the thymidylate kinase family.

It catalyses the reaction dTMP + ATP = dTDP + ADP. In terms of biological role, phosphorylation of dTMP to form dTDP in both de novo and salvage pathways of dTTP synthesis. This is Thymidylate kinase from Streptococcus pyogenes serotype M1.